We begin with the raw amino-acid sequence, 813 residues long: DNA gyrase subunit A (813 aa).

The 467-residue stretch at 38–504 (LPDVRDGLKP…EIEYLDVEDF (467 aa)) folds into the Topo IIA-type catalytic domain. Residue Tyr126 is the O-(5'-phospho-DNA)-tyrosine intermediate of the active site. The GyrA-box motif lies at 531–537 (QNRGGKG).

Belongs to the type II topoisomerase GyrA/ParC subunit family. In terms of assembly, heterotetramer, composed of two GyrA and two GyrB chains. In the heterotetramer, GyrA contains the active site tyrosine that forms a transient covalent intermediate with DNA, while GyrB binds cofactors and catalyzes ATP hydrolysis.

Its subcellular location is the cytoplasm. The catalysed reaction is ATP-dependent breakage, passage and rejoining of double-stranded DNA.. In terms of biological role, a type II topoisomerase that negatively supercoils closed circular double-stranded (ds) DNA in an ATP-dependent manner to modulate DNA topology and maintain chromosomes in an underwound state. Negative supercoiling favors strand separation, and DNA replication, transcription, recombination and repair, all of which involve strand separation. Also able to catalyze the interconversion of other topological isomers of dsDNA rings, including catenanes and knotted rings. Type II topoisomerases break and join 2 DNA strands simultaneously in an ATP-dependent manner. The protein is DNA gyrase subunit A of Treponema pallidum (strain Nichols).